Reading from the N-terminus, the 265-residue chain is Urease accessory protein UreH (265 aa).

The protein belongs to the UreD family. UreH, UreF and UreG form a complex that acts as a GTP-hydrolysis-dependent molecular chaperone, activating the urease apoprotein by helping to assemble the nickel containing metallocenter of UreC. The UreE protein probably delivers the nickel.

Its subcellular location is the cytoplasm. Its function is as follows. Required for maturation of urease via the functional incorporation of the urease nickel metallocenter. This is Urease accessory protein UreH from Helicobacter pylori (strain G27).